We begin with the raw amino-acid sequence, 399 residues long: Centrosomal protein 43 (399 aa).

Positions 70–102 (DGRLVASLVAEFLQFFNLDFTLAVFQPETSTFQ) constitute a LisH domain. The residue at position 143 (T143) is a Phosphothreonine. A disordered region spans residues 143–311 (TSGEGALDLS…LKESESKRGN (169 aa)). Phosphoserine is present on residues S152, S156, S160, and S202. Positions 197 to 209 (NDASHSDTSISSS) are enriched in low complexity. Residues 245–256 (PEEDDLEGDSFF) are compositionally biased toward acidic residues. Residues 286-302 (APPLKSGLSSLAGAPSL) are compositionally biased toward low complexity. Phosphoserine occurs at positions 301 and 326. A disordered region spans residues 328-357 (GLGTGEEDDYVDDFNSTSHRSEKSELSIGE). Y337 bears the Phosphotyrosine mark.

This sequence belongs to the CEP43 family. As to quaternary structure, homodimer. Part of a ternary complex that contains CEP350, CEP43 and MAPRE1. Interacts directly with CEP350 and MAPRE1. Interacts with CEP19. Interacts (via N-terminus) with CEP350 (via C-terminus).

The protein localises to the cytoplasm. The protein resides in the cytoskeleton. Its subcellular location is the microtubule organizing center. It localises to the centrosome. It is found in the centriole. The protein localises to the cilium basal body. Required for anchoring microtubules to the centrosomes. Required for ciliation. This Bos taurus (Bovine) protein is Centrosomal protein 43 (CEP43).